An 870-amino-acid polypeptide reads, in one-letter code: Alanine--tRNA ligase (870 aa).

4 residues coordinate Zn(2+): H585, H589, C689, and H693.

This sequence belongs to the class-II aminoacyl-tRNA synthetase family. Requires Zn(2+) as cofactor.

It is found in the cytoplasm. The catalysed reaction is tRNA(Ala) + L-alanine + ATP = L-alanyl-tRNA(Ala) + AMP + diphosphate. Catalyzes the attachment of alanine to tRNA(Ala) in a two-step reaction: alanine is first activated by ATP to form Ala-AMP and then transferred to the acceptor end of tRNA(Ala). Also edits incorrectly charged Ser-tRNA(Ala) and Gly-tRNA(Ala) via its editing domain. In Picrophilus torridus (strain ATCC 700027 / DSM 9790 / JCM 10055 / NBRC 100828 / KAW 2/3), this protein is Alanine--tRNA ligase.